The primary structure comprises 291 residues: Porphobilinogen deaminase (291 aa).

At Cys-237 the chain carries S-(dipyrrolylmethanemethyl)cysteine.

It belongs to the HMBS family. In terms of assembly, monomer. Dipyrromethane serves as cofactor.

The enzyme catalyses 4 porphobilinogen + H2O = hydroxymethylbilane + 4 NH4(+). It participates in porphyrin-containing compound metabolism; protoporphyrin-IX biosynthesis; coproporphyrinogen-III from 5-aminolevulinate: step 2/4. Functionally, tetrapolymerization of the monopyrrole PBG into the hydroxymethylbilane pre-uroporphyrinogen in several discrete steps. The protein is Porphobilinogen deaminase of Clostridium perfringens (strain SM101 / Type A).